Reading from the N-terminus, the 601-residue chain is FAD-binding monooxygenase stcW (601 aa).

FAD-binding positions include Phe-42–Ser-43, Glu-64, Trp-73, Asp-84, Tyr-90, and Val-133.

The protein belongs to the FAD-binding monooxygenase family. Requires FAD as cofactor.

It participates in mycotoxin biosynthesis; sterigmatocystin biosynthesis. Its function is as follows. FAD-binding monooxygenase; part of the gene cluster that mediates the biosynthesis of sterigmatocystin (ST), a polyketide-derived furanocoumarin which is part of the most toxic and carcinogenic compounds among the known mycotoxins. The first step in the biosynthesis of sterigmatocystin is the production of hexanoate by the fatty acid synthase (FAS) units stcJ and stcK. The polyketide backbone is assembled by the non-reducing polyketide synthase stcA by condensation of the starter hexanoyl-CoA and 7 malonyl-CoA extender units followed by cyclization and release of norsolorinic acid. Norsolorinic acid is the first stable intermediate in the biosynthesis of sterigmatocystin and is converted into averantin (AVN) by the ketoreductase stcE which reduces the hexanoate ketone to an alcohol. Averantin is then oxidized into 5'-hydroxyaverantin (HAVN) by the cytochrome P450 monooxygenase stcF. 5'-hydroxyaverantin is further converted to 5'-oxyaverantin (OAVN) by the 5'-hydroxyaverantin dehydrogenase stcG. The next step is the conversion of OAVN into averufin (AVF) which is catalyzed by a yet to be identified enzyme. The cytochrome P450 monooxygenase stcB and the flavin-binding monooxygenase stcW are both required for the conversion of averufin to 1-hydroxyversicolorone. The esterase stcI probably catalyzes the formation of versiconal hemiacetal acetate from 1-hydroxyversicolorone. The oxydoreductase stcN then probably catalyzes the biosynthetic step from versiconal to versicolorin B (VERB). The next step is performed by the versicolorin B desaturase stcL to produce versicolorin A (VERA). The ketoreductase stcU and the cytochrome P450 monooxygenase stcS are involved in the conversion of versicolorin A to demethylsterigmatocystin. The Baeyer-Villiger oxidas stcQ and the reductase stcR might be involved in the biosynthetic step from versicolorin A to demethylsterigmatocystin. The final step in the biosynthesis of sterigmatocystin is the methylation of demethylsterigmatocystin catalyzed by the methyltransferase stcP. This Emericella nidulans (strain FGSC A4 / ATCC 38163 / CBS 112.46 / NRRL 194 / M139) (Aspergillus nidulans) protein is FAD-binding monooxygenase stcW.